A 351-amino-acid polypeptide reads, in one-letter code: Peptide chain release factor 1 (351 aa).

Glutamine 229 is subject to N5-methylglutamine.

This sequence belongs to the prokaryotic/mitochondrial release factor family. Post-translationally, methylated by PrmC. Methylation increases the termination efficiency of RF1.

Its subcellular location is the cytoplasm. Functionally, peptide chain release factor 1 directs the termination of translation in response to the peptide chain termination codons UAG and UAA. This chain is Peptide chain release factor 1, found in Cereibacter sphaeroides (strain ATCC 17023 / DSM 158 / JCM 6121 / CCUG 31486 / LMG 2827 / NBRC 12203 / NCIMB 8253 / ATH 2.4.1.) (Rhodobacter sphaeroides).